Here is a 75-residue protein sequence, read N- to C-terminus: Porwaprin-b (75 aa).

The signal sequence occupies residues 1 to 24 (MSSGGLLLLLGLLTLWAELTPVSG). In terms of domain architecture, WAP spans 27–72 (RPVKPGLCPPRPQKPPCVKECKNDWSCRGEQKCCHYGCIYECRDPI). Intrachain disulfides connect cysteine 34–cysteine 60, cysteine 43–cysteine 64, cysteine 47–cysteine 59, and cysteine 53–cysteine 68.

It belongs to the venom waprin family. As to expression, expressed by the venom gland.

The protein localises to the secreted. Its function is as follows. Damages membranes of susceptible bacteria. Has no hemolytic activity. Not toxic to mice. Does not inhibit the proteinases elastase and cathepsin G. The polypeptide is Porwaprin-b (Pseudechis porphyriacus (Red-bellied black snake)).